The primary structure comprises 322 residues: Phospho-N-acetylmuramoyl-pentapeptide-transferase (322 aa).

The next 10 helical transmembrane spans lie at 6–26 (ASCI…PLLI), 54–74 (TMGG…VTAW), 82–102 (VWIL…DDGI), 122–142 (IIIA…FGLY), 145–165 (FAGV…WLVG), 176–196 (LDGL…YIAF), 200–220 (NFAI…FFIF), 227–247 (IFMG…VSIM), 255–275 (LLVG…VISF), and 302–322 (VDIV…AIWG).

Belongs to the glycosyltransferase 4 family. MraY subfamily. The cofactor is Mg(2+).

It localises to the cell membrane. It carries out the reaction UDP-N-acetyl-alpha-D-muramoyl-L-alanyl-gamma-D-glutamyl-L-lysyl-D-alanyl-D-alanine + di-trans,octa-cis-undecaprenyl phosphate = Mur2Ac(oyl-L-Ala-gamma-D-Glu-L-Lys-D-Ala-D-Ala)-di-trans,octa-cis-undecaprenyl diphosphate + UMP. It functions in the pathway cell wall biogenesis; peptidoglycan biosynthesis. Functionally, catalyzes the initial step of the lipid cycle reactions in the biosynthesis of the cell wall peptidoglycan: transfers peptidoglycan precursor phospho-MurNAc-pentapeptide from UDP-MurNAc-pentapeptide onto the lipid carrier undecaprenyl phosphate, yielding undecaprenyl-pyrophosphoryl-MurNAc-pentapeptide, known as lipid I. In Lactobacillus helveticus (strain DPC 4571), this protein is Phospho-N-acetylmuramoyl-pentapeptide-transferase.